We begin with the raw amino-acid sequence, 236 residues long: Peptidase E (236 aa).

Active-site charge relay system residues include Ser122, Asp137, and His159.

This sequence belongs to the peptidase S51 family.

The protein resides in the cytoplasm. It catalyses the reaction Dipeptidase E catalyzes the hydrolysis of dipeptides Asp-|-Xaa. It does not act on peptides with N-terminal Glu, Asn or Gln, nor does it cleave isoaspartyl peptides.. Its function is as follows. Hydrolyzes dipeptides containing N-terminal aspartate residues. May play a role in allowing the cell to use peptide aspartate to spare carbon otherwise required for the synthesis of the aspartate family of amino acids. This Shewanella putrefaciens (strain CN-32 / ATCC BAA-453) protein is Peptidase E.